The primary structure comprises 141 residues: Putative inactive deoxyuridine 5'-triphosphate nucleotidohydrolase-like protein FLJ16323 (141 aa).

Belongs to the dUTPase family.

This is Putative inactive deoxyuridine 5'-triphosphate nucleotidohydrolase-like protein FLJ16323 from Homo sapiens (Human).